The sequence spans 290 residues: Fat storage-inducing transmembrane protein 1 (290 aa).

Residues 1 to 18 (MERGPVVGAGLGARARIR) lie on the Lumenal side of the membrane. A helical membrane pass occupies residues 19-39 (TLLGCLVKVLLWVASALLYFG). At 40–54 (SEQAARLLGSPCLRR) the chain is on the cytoplasmic side. The chain crosses the membrane as a helical span at residues 55–75 (LYHAWLAAVVIFGPLLQFHVN). Topologically, residues 76–94 (PRTIFASHGNFFNIKFVNS) are lumenal. The helical transmembrane segment at 95–115 (AWGWTCTFLGGFVLLVVFLAT) threads the bilayer. Topologically, residues 116–141 (RRVAVTARHLSRLVVGAAVWRGAGRA) are cytoplasmic. Residues 142–162 (FLLIEDLTGSCFEPLPQGLLL) form a helical membrane-spanning segment. At 163 to 187 (HELPDRRSRLAAGHQWRGYTVSSHT) the chain is on the lumenal side. Residue His-186 is part of the active site. A helical transmembrane segment spans residues 188-208 (FLLTFCCLLMAEEAAVFAKYL). The Cytoplasmic portion of the chain corresponds to 209–220 (AHGLPAGAPLRL). The chain crosses the membrane as a helical span at residues 221-241 (VFLLNVLLLGLWNFLLLCTVI). At 242–249 (YFHQYTHK) the chain is on the lumenal side. Residue His-244 is part of the active site. The chain crosses the membrane as a helical span at residues 250–270 (VVGAAVGTFAWYLTYGSWYHQ). Residues 271-290 (PWSPGSPGHGLFTHPSRKHN) lie on the Cytoplasmic side of the membrane.

Belongs to the FIT family. FIT1 subfamily.

Its subcellular location is the endoplasmic reticulum membrane. Functionally, plays an important role in the formation of lipid droplets (LDs) which are storage organelles at the center of lipid and energy homeostasis. Directly binds to diacylglycerol (DAGs) and triacylglycerol. This chain is Fat storage-inducing transmembrane protein 1, found in Sus scrofa (Pig).